Here is a 1317-residue protein sequence, read N- to C-terminus: MLDVNFFDELRIGLATADDIRQWSYGEVKKPETINYRTLKPEKDGLFCEKIFGPTRDWECYCGKYKRVRFKGIICERCGVEVTRAKVRRERMGHIELAAPVTHIWYFKGVPSRLGYLLDLAPKDLEKIIYFAAYVITSVDEELRHNELSTLEAEMEVEKKAVADQRDADLEARAQKLEADLAELEAEGAKSDVRRKVKDGGEREMRQIRDRAQRELDRLDEIWNTFTKLAPKQLIVDEVLYRELTDRYGEYFTGAMGAESIQKLMENFDIDAEAESLRETIRTGKGQKKLRALKRLKVVAAFQANGNSPMGMVLDAVPVIPPELRPMVQLDGGRFATSDLNDLYRRVINRNNRLKRLIDLGAPEIIVNNEKRMLQESVDALFDNGRRGRPVTGPGNRPLKSLSDLLKGKQGRFRQNLLGKRVDYSGRSVIVVGPQLKLHQCGLPKLMALELFKPFVMKRLVDLNHAQNIKSAKRMVERQRPQVWDVLEEVIAEHPVLLNRAPTLHRLGIQAFEPQLVEGKAIQLHPLVCEAFNADFDGDQMAVHLPLSAEAQAEARILMLSSNNILSPASGRPLAMPRLDMVTGLYYLTRLEEGAKGEYRPATADAPEFGVYSSPAEAQMAVDRGELTVRSKIKVRLTDQRPPKDVEAELFPEGWQRGDAWTTETTLGRVLFNELLPADYPFINEPMPKKRQATIINDLAERYPMIVVAQTVDKLKDAGFYWATRSGVTVSMSDVLVPPEKAEIMERYEAQSDQIEKKYQRGALDHQERNNALVKIWQEATEEVGKALRAHYPADNPIITIVDSGATGNFTQTRTLAGMKGLVTNPKGEFIPRPIKSSFREGLTVLEYFINTHGARKGLADTALRTADSGYLTRRLVDVSQDVIVREHDCGTERGIVVPIAEKQPDGSIIRDPHVETSTYARTLAADAVDANGNVIVAKGADLGDPALEALLEAGITEVKVRSVLTCTTGTGVCATCYGRSMATGKLVDIGEAVGIVAAQSIGEPGTQLTMRTFHQGGVAGDDITGGLPRVQELFEARVPKGKAPIAEVSGRVRLEDDDRFYKITIIPDDGGEEVVYDKLSKRQRLRVFKHDDGTERLLSDGDHVEVGQQLLEGAADPHEVLRVMGPRQVQVHLVHEVQEVYRSQGVSIHDKHIEVIVRQMLRRVTIIDSGSTEFLPGSLTERAEFEAANRRVVAEGGEPASGRPVLMGITKASLATDSWLSAASFQETTRVLTDAAINCRSDKLIGLKENVIIGKLIPAGTGINRYRNIQVQPTEEARAAAYAVPSYDDTYYSPDSFGSSTGAAVPLDDYGFSDYR.

Residues cysteine 60, cysteine 62, cysteine 75, and cysteine 78 each contribute to the Zn(2+) site. Mg(2+)-binding residues include aspartate 535, aspartate 537, and aspartate 539. Cysteine 890, cysteine 967, cysteine 974, and cysteine 977 together coordinate Zn(2+).

Belongs to the RNA polymerase beta' chain family. As to quaternary structure, the RNAP catalytic core consists of 2 alpha, 1 beta, 1 beta' and 1 omega subunit. When a sigma factor is associated with the core the holoenzyme is formed, which can initiate transcription. Mg(2+) is required as a cofactor. Requires Zn(2+) as cofactor.

It catalyses the reaction RNA(n) + a ribonucleoside 5'-triphosphate = RNA(n+1) + diphosphate. DNA-dependent RNA polymerase catalyzes the transcription of DNA into RNA using the four ribonucleoside triphosphates as substrates. This Nocardia farcinica (strain IFM 10152) protein is DNA-directed RNA polymerase subunit beta'.